We begin with the raw amino-acid sequence, 637 residues long: Probable ATP-binding protein YheS (637 aa).

2 ABC transporter domains span residues 2–246 (IVFS…AQQQ) and 313–527 (LKME…KQEN). Residues 34 to 41 (GKNGCGKS) and 345 to 352 (GRNGAGKS) contribute to the ATP site. Residues 523-559 (QKQENQTDEAPKENANSAQARKDQKRREAELRAQTQP) are disordered. Residues 542–553 (ARKDQKRREAEL) are compositionally biased toward basic and acidic residues.

Belongs to the ABC transporter superfamily. ABCF family. YheS subfamily.

Its function is as follows. Genetic data indicate it may be involved in ribosome assembly or function. The polypeptide is Probable ATP-binding protein YheS (yheS) (Escherichia coli O157:H7).